Reading from the N-terminus, the 494-residue chain is Gram-negative bacteria-binding protein 1 (494 aa).

Positions 1–19 (MPGLCIGILLLIGFGCTTA) are cleaved as a signal peptide. Positions 20 to 120 (YKIPTPTVEL…QPLPVCNLGG (101 aa)) constitute a CBM39 domain. N56 and N81 each carry an N-linked (GlcNAc...) asparagine glycan. The disordered stretch occupies residues 126–160 (GCSPGDDDFTDDNQLSTEDSALEPTAPSVCEPSES). Residues 135 to 494 (TDDNQLSTED…DYVRVFATDN (360 aa)) form the GH16 domain. N185 carries N-linked (GlcNAc...) asparagine glycosylation.

It belongs to the insect beta-1,3-glucan binding protein family.

The protein resides in the cell membrane. Plays a key role in innate immunity by acting as a pattern recognition receptor for beta-1,3-glucan from fungi and lipopolysaccharide from Gram-negative bacteria. Upon recognition of invading microorganism-derived products, acts upstream of protease spz processing enzyme SPE to activate the Toll pathway and to induce the expression of antimicrobial peptides drosomycin, cecropin and attacin. This chain is Gram-negative bacteria-binding protein 1, found in Drosophila melanogaster (Fruit fly).